Consider the following 336-residue polypeptide: Holliday junction branch migration complex subunit RuvB (336 aa).

The tract at residues 1–184 is large ATPase domain (RuvB-L); the sequence is MYDEERIVSG…FGIVGHMEYY (184 aa). ATP-binding positions include L23, R24, G65, K68, T69, T70, 131 to 133, R174, Y184, and R221; that span reads EDY. T69 lines the Mg(2+) pocket. The small ATPAse domain (RuvB-S) stretch occupies residues 185 to 255; the sequence is NEVDLSQIIK…IVQFALDLLR (71 aa). The segment at 258-336 is head domain (RuvB-H); it reads KVGLDRTDRK…HLGIKYNKEG (79 aa). DNA is bound by residues R313 and R318.

Belongs to the RuvB family. Homohexamer. Forms an RuvA(8)-RuvB(12)-Holliday junction (HJ) complex. HJ DNA is sandwiched between 2 RuvA tetramers; dsDNA enters through RuvA and exits via RuvB. An RuvB hexamer assembles on each DNA strand where it exits the tetramer. Each RuvB hexamer is contacted by two RuvA subunits (via domain III) on 2 adjacent RuvB subunits; this complex drives branch migration. In the full resolvosome a probable DNA-RuvA(4)-RuvB(12)-RuvC(2) complex forms which resolves the HJ.

It localises to the cytoplasm. It catalyses the reaction ATP + H2O = ADP + phosphate + H(+). Functionally, the RuvA-RuvB-RuvC complex processes Holliday junction (HJ) DNA during genetic recombination and DNA repair, while the RuvA-RuvB complex plays an important role in the rescue of blocked DNA replication forks via replication fork reversal (RFR). RuvA specifically binds to HJ cruciform DNA, conferring on it an open structure. The RuvB hexamer acts as an ATP-dependent pump, pulling dsDNA into and through the RuvAB complex. RuvB forms 2 homohexamers on either side of HJ DNA bound by 1 or 2 RuvA tetramers; 4 subunits per hexamer contact DNA at a time. Coordinated motions by a converter formed by DNA-disengaged RuvB subunits stimulates ATP hydrolysis and nucleotide exchange. Immobilization of the converter enables RuvB to convert the ATP-contained energy into a lever motion, pulling 2 nucleotides of DNA out of the RuvA tetramer per ATP hydrolyzed, thus driving DNA branch migration. The RuvB motors rotate together with the DNA substrate, which together with the progressing nucleotide cycle form the mechanistic basis for DNA recombination by continuous HJ branch migration. Branch migration allows RuvC to scan DNA until it finds its consensus sequence, where it cleaves and resolves cruciform DNA. The chain is Holliday junction branch migration complex subunit RuvB from Ligilactobacillus salivarius (strain UCC118) (Lactobacillus salivarius).